The primary structure comprises 971 residues: Exportin-2 (971 aa).

An Importin N-terminal domain is found at 29-102 (AEKFLESVEG…KANIVNLMLT (74 aa)).

It belongs to the XPO2/CSE1 family. In terms of assembly, interacts with cftr. In terms of tissue distribution, detected in larval gut, liver, exocrine pancreas and part of the brain and retina at 96 hpf.

The protein localises to the cytoplasm. It is found in the nucleus. Its subcellular location is the apical cell membrane. It localises to the basal cell membrane. The protein resides in the lateral cell membrane. In terms of biological role, export receptor for importin alpha. Mediates importin-alpha re-export from the nucleus to the cytoplasm after import substrates have been released into the nucleoplasm. Negatively regulates fluid secretion and plays a role in fluid homeostasis by down-regulating cftr activity. This chain is Exportin-2 (cse1l), found in Danio rerio (Zebrafish).